The following is a 585-amino-acid chain: MSDITDKTAEQLEQLKIEEQTAPTTTESETPKVETSGASLYVGELEPTVSEALLYDIFSPIGSVSSIRVCRDAITNTSLGYAYVNFHDHEAGPKAIEQLNYTLIKGKPCRIMWSQRDPSLRKKGSGNIYIKNLHPAIDNKSLHETFSTFGNILSCKVATDENGVSRGFGFVHFENESDARDAIEAVDGMLMNDQEVYVALHVSKKDRQSKLEEVKAKFTNVYVKNIDQETSQEEFEELFGKYGKITSAVLEKDSEGKLRGFGFVNFEDHAAAAKAVDELNELEFKGQKLYVGRAQKKYERLQELKKQYEAARLEKLAKYQGVNLFVKNLDDSIDDEKLKEEFAPFGTITSAKVMRDETGNSRGFGFVCFSTPEEATKAITEKNQQIVAGKPLYVAIAQRKEVRRNQLAQQIQARNQMRFQHANAAAAAAVAGLPGQFMPPPMYYGGIPPRVPFQGPNPQMAGMPKNGAMPPQQFGRPGPMYGGFAPQGQFPRNGQQQQFYQQKQRQALGEQLYQKVFAKTQDDEAAGKITGMILDLPPQQVIQLLENDELLEQHFQEAHAAYQKFKEDQEAQAAAAAAAAADARE.

The interval glutamine 14–glycine 37 is disordered. 4 RRM domains span residues alanine 38–arginine 116, glycine 126–serine 203, threonine 219–lysine 296, and valine 322–arginine 399. One can recognise a PABC domain in the interval glycine 488–glutamate 567.

The protein belongs to the polyadenylate-binding protein type-1 family.

Its subcellular location is the cytoplasm. It localises to the nucleus. Binds the poly(A) tail of mRNA. Appears to be an important mediator of the multiple roles of the poly(A) tail in mRNA biogenesis, stability and translation. In the nucleus, involved in both mRNA cleavage and polyadenylation. Is also required for efficient mRNA export to the cytoplasm. Acts in concert with a poly(A)-specific nuclease (PAN) to affect poly(A) tail shortening, which may occur concomitantly with either nucleocytoplasmic mRNA transport or translational initiation. In the cytoplasm, stimulates translation initiation and regulates mRNA decay through translation termination-coupled poly(A) shortening, probably mediated by PAN. This Eremothecium gossypii (strain ATCC 10895 / CBS 109.51 / FGSC 9923 / NRRL Y-1056) (Yeast) protein is Polyadenylate-binding protein, cytoplasmic and nuclear (PAB1).